We begin with the raw amino-acid sequence, 1382 residues long: Hepatocyte growth factor receptor (1382 aa).

The N-terminal stretch at 1–24 is a signal peptide; it reads MKAPAVLAPGILVLLFTLVQKSYG. Topologically, residues 25–935 are extracellular; that stretch reads ECKEALVKSE…VQPDQNFTGL (911 aa). A Sema domain is found at 27-516; it reads KEALVKSEMN…TGKKITRIPL (490 aa). Asn-45 is a glycosylation site (N-linked (GlcNAc...) asparagine). Intrachain disulfides connect Cys-95–Cys-101, Cys-98–Cys-160, Cys-133–Cys-141, and Cys-173–Cys-176. Asn-106 is a glycosylation site (N-linked (GlcNAc...) asparagine). N-linked (GlcNAc...) asparagine glycans are attached at residues Asn-203 and Asn-359. 2 disulfide bridges follow: Cys-299/Cys-364 and Cys-386/Cys-398. N-linked (GlcNAc...) asparagine glycans are attached at residues Asn-400 and Asn-406. 4 cysteine pairs are disulfide-bonded: Cys-521-Cys-539, Cys-527-Cys-562, Cys-530-Cys-546, and Cys-542-Cys-552. IPT/TIG domains are found at residues 564-656, 658-740, and 743-837; these read PAIY…FSYV, PIIT…FSYQ, and PIVY…LIYV. Residue Thr-583 is glycosylated (O-linked (Man) threonine). Asn-608 and Asn-636 each carry an N-linked (GlcNAc...) asparagine glycan. Thr-677 and Thr-762 each carry an O-linked (Man) threonine glycan. 3 N-linked (GlcNAc...) asparagine glycosylation sites follow: Asn-786, Asn-880, and Asn-931. Residues 936–956 traverse the membrane as a helical segment; the sequence is IAGVISISTIVLLLLGLFLWL. Topologically, residues 957–1379 are cytoplasmic; sequence KRKKQIKDLG…LSSQDNIDGE (423 aa). Ser-967 is modified (phosphoserine). Phosphothreonine is present on Thr-978. Phosphoserine is present on residues Ser-991, Ser-998, and Ser-1001. Tyr-1004 bears the Phosphotyrosine mark. Residues 1079–1346 enclose the Protein kinase domain; the sequence is VHFNEVIGRG…RISAIFSTFI (268 aa). ATP contacts are provided by residues 1085–1093 and Lys-1111; that span reads IGRGHFGCV. The Proton acceptor role is filled by Asp-1205. The interaction with RANBP9 stretch occupies residues 1213 to 1382; that stretch reads LDEKFTVKVA…QDNIDGEGDT (170 aa). A Phosphotyrosine modification is found at Tyr-1231. Phosphotyrosine; by autocatalysis is present on residues Tyr-1235 and Tyr-1236. A Phosphothreonine modification is found at Thr-1290. Residues 1321 to 1360 form an interaction with MUC20 region; that stretch reads WHPRAELRPSFSELVSRISAIFSTFIGEHYVHVNATYVNV. Phosphotyrosine; by autocatalysis is present on residues Tyr-1350 and Tyr-1357. Tyr-1366 is modified (phosphotyrosine).

The protein belongs to the protein kinase superfamily. Tyr protein kinase family. Heterodimer made of an alpha chain (50 kDa) and a beta chain (145 kDa) which are disulfide linked. Binds PLXNB1. Interacts when phosphorylated with downstream effectors including STAT3, PIK3R1, SRC, PCLG1, GRB2 and GAB1. Interacts with SPSB1, SPSB2 and SPSB4. Interacts with INPP5D/SHIP1. When phosphorylated at Tyr-1357, interacts with INPPL1/SHIP2. Interacts with RANBP9 and RANBP10, as well as SPSB1, SPSB2, SPSB3 and SPSB4. SPSB1 binding occurs in the presence and in the absence of HGF, however HGF treatment has a positive effect on this interaction. Interacts with MUC20; prevents interaction with GRB2 and suppresses hepatocyte growth factor-induced cell proliferation. Interacts with GRB10. Interacts with PTPN1 and PTPN2. Interacts with HSP90AA1 and HSP90AB1; the interaction suppresses MET kinase activity. Interacts with tensin TNS3. Interacts (when phosphorylated) with tensin TNS4 (via SH2 domain); the interaction increases MET protein stability by inhibiting MET endocytosis and subsequent lysosomal degradation. As to quaternary structure, (Microbial infection) Interacts with L.monocytogenes InlB. InlB probably dimerizes upon binding to MET, which encourages subsequent dimerization of MET. Post-translationally, autophosphorylated in response to ligand binding on Tyr-1235 and Tyr-1236 in the kinase domain leading to further phosphorylation of Tyr-1350 and Tyr-1357 in the C-terminal multifunctional docking site. Dephosphorylated by PTPRJ at Tyr-1350 and Tyr-1366. Dephosphorylated by PTPN1 and PTPN2. Ubiquitinated. Ubiquitination by CBL regulates the receptor stability and activity through proteasomal degradation. In terms of processing, (Microbial infection) Tyrosine phosphorylation is stimulated by L.monocytogenes InlB. Post-translationally, O-mannosylation of IPT/TIG domains by TMEM260 is required for protein maturation. O-mannosylated residues are composed of single mannose glycans that are not elongated or modified.

It localises to the membrane. The catalysed reaction is L-tyrosyl-[protein] + ATP = O-phospho-L-tyrosyl-[protein] + ADP + H(+). With respect to regulation, in its inactive state, the C-terminal tail interacts with the catalytic domain and inhibits the kinase activity. Upon ligand binding, the C-terminal tail is displaced and becomes phosphorylated, thus increasing the kinase activity. Its function is as follows. Receptor tyrosine kinase that transduces signals from the extracellular matrix into the cytoplasm by binding to hepatocyte growth factor/HGF ligand. Regulates many physiological processes including proliferation, scattering, morphogenesis and survival. Ligand binding at the cell surface induces autophosphorylation of MET on its intracellular domain that provides docking sites for downstream signaling molecules. Following activation by ligand, interacts with the PI3-kinase subunit PIK3R1, PLCG1, SRC, GRB2, STAT3 or the adapter GAB1. Recruitment of these downstream effectors by MET leads to the activation of several signaling cascades including the RAS-ERK, PI3 kinase-AKT, or PLCgamma-PKC. The RAS-ERK activation is associated with the morphogenetic effects while PI3K/AKT coordinates prosurvival effects. During embryonic development, MET signaling plays a role in gastrulation, development and migration of muscles and neuronal precursors, angiogenesis and kidney formation. In adults, participates in wound healing as well as organ regeneration and tissue remodeling. Also promotes differentiation and proliferation of hematopoietic cells. (Microbial infection) Acts as a receptor for Listeria monocytogenes internalin InlB, mediating entry of the pathogen into cells. This is Hepatocyte growth factor receptor (MET) from Canis lupus familiaris (Dog).